The primary structure comprises 181 residues: tRNA-splicing endonuclease (181 aa).

Residues Tyr-118, His-126, and Lys-157 contribute to the active site.

It belongs to the tRNA-intron endonuclease family. Archaeal short subfamily. Homotetramer; although the tetramer contains four active sites, only two participate in the cleavage. Therefore, it should be considered as a dimer of dimers.

The catalysed reaction is pretRNA = a 3'-half-tRNA molecule with a 5'-OH end + a 5'-half-tRNA molecule with a 2',3'-cyclic phosphate end + an intron with a 2',3'-cyclic phosphate and a 5'-hydroxyl terminus.. Functionally, endonuclease that removes tRNA introns. Cleaves pre-tRNA at the 5'- and 3'-splice sites to release the intron. The products are an intron and two tRNA half-molecules bearing 2',3' cyclic phosphate and 5'-OH termini. Recognizes a pseudosymmetric substrate in which 2 bulged loops of 3 bases are separated by a stem of 4 bp. The protein is tRNA-splicing endonuclease of Hyperthermus butylicus (strain DSM 5456 / JCM 9403 / PLM1-5).